The primary structure comprises 315 residues: Ribosomal protein L11 methyltransferase (315 aa).

S-adenosyl-L-methionine is bound by residues threonine 152, glycine 185, aspartate 207, and asparagine 249.

Belongs to the methyltransferase superfamily. PrmA family.

The protein localises to the cytoplasm. The catalysed reaction is L-lysyl-[protein] + 3 S-adenosyl-L-methionine = N(6),N(6),N(6)-trimethyl-L-lysyl-[protein] + 3 S-adenosyl-L-homocysteine + 3 H(+). Its function is as follows. Methylates ribosomal protein L11. This is Ribosomal protein L11 methyltransferase from Geotalea uraniireducens (strain Rf4) (Geobacter uraniireducens).